The chain runs to 171 residues: Adenine phosphoribosyltransferase (171 aa).

The protein belongs to the purine/pyrimidine phosphoribosyltransferase family. Homodimer.

It localises to the cytoplasm. It carries out the reaction AMP + diphosphate = 5-phospho-alpha-D-ribose 1-diphosphate + adenine. It functions in the pathway purine metabolism; AMP biosynthesis via salvage pathway; AMP from adenine: step 1/1. In terms of biological role, catalyzes a salvage reaction resulting in the formation of AMP, that is energically less costly than de novo synthesis. The protein is Adenine phosphoribosyltransferase of Shouchella clausii (strain KSM-K16) (Alkalihalobacillus clausii).